A 168-amino-acid polypeptide reads, in one-letter code: NADH-ubiquinone oxidoreductase chain 6 (168 aa).

Helical transmembrane passes span 1–21, 27–47, 50–70, 87–107, and 143–163; these read MKMMTIYIISLLLMIGFVAFA, IYGGLSLVVSGGLGCGMVVSL, VFLGLVVFLVYLGGMLVVFGY, VVAFIMLLFVLLLQVGWYFMS, and WALALLGWILFMTIYVVLEVV.

Belongs to the complex I subunit 6 family. Core subunit of respiratory chain NADH dehydrogenase (Complex I) which is composed of 45 different subunits.

Its subcellular location is the mitochondrion inner membrane. The enzyme catalyses a ubiquinone + NADH + 5 H(+)(in) = a ubiquinol + NAD(+) + 4 H(+)(out). Functionally, core subunit of the mitochondrial membrane respiratory chain NADH dehydrogenase (Complex I) which catalyzes electron transfer from NADH through the respiratory chain, using ubiquinone as an electron acceptor. Essential for the catalytic activity and assembly of complex I. The sequence is that of NADH-ubiquinone oxidoreductase chain 6 (MT-ND6) from Didelphis virginiana (North American opossum).